A 369-amino-acid polypeptide reads, in one-letter code: Protein V (369 aa).

Disordered regions lie at residues 1–23 (MDQD…GGRE) and 54–320 (INTL…GHRR). Basic and acidic residues-rich tracts occupy residues 7 to 20 (ISKE…EASG), 99 to 110 (AEAHARNVDKQN), 150 to 168 (GAED…RGED), and 175 to 193 (EEIR…RADN). Phosphoserine; by host occurs at positions 249, 257, and 260. His-318, Cys-337, Cys-341, Cys-353, Cys-355, Cys-358, Cys-362, and Cys-365 together coordinate Zn(2+).

Belongs to the paramyxoviruses V protein family. In terms of assembly, interacts with host IFIH1/MDA5 and DHX58/LGP2. Interacts with host IRF3. Interacts with host RIGI regulatory protein (via CARDs domain) and host TRIM25 (via SPRY domain); these interactions prevent TRIM25-mediated ubiquitination of RIG-I and disrupts downstream RIG-I signaling.

It localises to the host cytoplasm. Its function is as follows. Plays an essential role in the inhibition of host immune response. Prevents the establishment of cellular antiviral state by blocking interferon-alpha/beta (IFN-alpha/beta) production and signaling pathway. Interacts with host IFIH1/MDA5 and DHX58/LGP2 to inhibit the transduction pathway involved in the activation of IFN-beta promoter, thus protecting the virus against cell antiviral state. Also interacts with and inhibits host IRF3. Blocks the type I interferon signaling pathway by disrupting the RIG-I signaling pathway. The sequence is that of Protein V (P/V/C) from Cavia cutleri (Guinea pig).